Here is a 247-residue protein sequence, read N- to C-terminus: Eukaryotic translation initiation factor 6 (247 aa).

Phosphoserine; by CK1 occurs at positions 174 and 175.

The protein belongs to the eIF-6 family. In terms of assembly, monomer. Associates with the 60S ribosomal subunit. Phosphorylation at Ser-174 and Ser-175 promotes nuclear export.

It is found in the cytoplasm. The protein resides in the nucleus. The protein localises to the nucleolus. In terms of biological role, binds to the 60S ribosomal subunit and prevents its association with the 40S ribosomal subunit to form the 80S initiation complex in the cytoplasm. Is also involved in ribosome biogenesis. Associates with pre-60S subunits in the nucleus and is involved in its nuclear export. This Aspergillus oryzae (strain ATCC 42149 / RIB 40) (Yellow koji mold) protein is Eukaryotic translation initiation factor 6 (tif6).